The primary structure comprises 406 residues: Cysteine desulfurase (406 aa).

K226 bears the N6-(pyridoxal phosphate)lysine mark. C364 (cysteine persulfide intermediate) is an active-site residue.

It belongs to the class-V pyridoxal-phosphate-dependent aminotransferase family. Csd subfamily. Homodimer. Interacts with SufE and the SufBCD complex composed of SufB, SufC and SufD. The interaction with SufE is required to mediate the direct transfer of the sulfur atom from the S-sulfanylcysteine. Requires pyridoxal 5'-phosphate as cofactor.

The protein resides in the cytoplasm. The catalysed reaction is (sulfur carrier)-H + L-cysteine = (sulfur carrier)-SH + L-alanine. It catalyses the reaction L-selenocysteine + AH2 = hydrogenselenide + L-alanine + A + H(+). It participates in cofactor biosynthesis; iron-sulfur cluster biosynthesis. Its function is as follows. Cysteine desulfurases mobilize the sulfur from L-cysteine to yield L-alanine, an essential step in sulfur metabolism for biosynthesis of a variety of sulfur-containing biomolecules. Component of the suf operon, which is activated and required under specific conditions such as oxidative stress and iron limitation. Acts as a potent selenocysteine lyase in vitro, that mobilizes selenium from L-selenocysteine. Selenocysteine lyase activity is however unsure in vivo. This Salmonella gallinarum (strain 287/91 / NCTC 13346) protein is Cysteine desulfurase.